A 364-amino-acid polypeptide reads, in one-letter code: Autophagy-related protein 14 (364 aa).

Residues 5-20 (CPICETQSHVFYCAHC) form a cysteine repeats region. Residues 38–114 (LGKINNALRN…QDRRIKEKSR (77 aa)) adopt a coiled-coil conformation.

The protein belongs to the ATG14 family. As to quaternary structure, component of the autophagy-specific VPS34 PI3-kinase complex I composed of VPS15, VPS30, VPS34, ATG14 and ATG38. Interacts directly with ATG38.

The protein localises to the preautophagosomal structure membrane. It localises to the vacuole membrane. Functionally, required for cytoplasm to vacuole transport (Cvt) and autophagy as a part of the autophagy-specific VPS34 PI3-kinase complex I. This complex is essential to recruit the ATG8-phosphatidylinositol conjugate and the ATG12-ATG5 conjugate to the pre-autophagosomal structure. ATG14 mediates the specific binding of the VPS34 PI3-kinase complex I to the preautophagosomal structure (PAS). Required for survival and/or proliferation in kidneys and in brain. The polypeptide is Autophagy-related protein 14 (Candida glabrata (strain ATCC 2001 / BCRC 20586 / JCM 3761 / NBRC 0622 / NRRL Y-65 / CBS 138) (Yeast)).